Consider the following 364-residue polypeptide: Uroporphyrinogen decarboxylase (364 aa).

Substrate contacts are provided by residues 28–32 (RQAGR), D78, Y160, T215, and H333.

It belongs to the uroporphyrinogen decarboxylase family. Homodimer.

The protein resides in the cytoplasm. It carries out the reaction uroporphyrinogen III + 4 H(+) = coproporphyrinogen III + 4 CO2. It functions in the pathway porphyrin-containing compound metabolism; protoporphyrin-IX biosynthesis; coproporphyrinogen-III from 5-aminolevulinate: step 4/4. Its function is as follows. Catalyzes the decarboxylation of four acetate groups of uroporphyrinogen-III to yield coproporphyrinogen-III. The sequence is that of Uroporphyrinogen decarboxylase from Burkholderia cenocepacia (strain ATCC BAA-245 / DSM 16553 / LMG 16656 / NCTC 13227 / J2315 / CF5610) (Burkholderia cepacia (strain J2315)).